Here is a 370-residue protein sequence, read N- to C-terminus: Chaperone protein DnaJ (370 aa).

The region spanning 4–68 (DYYQVLGVSK…QKRAAYDRFG (65 aa)) is the J domain. A CR-type zinc finger spans residues 133–211 (GIEKNISFSS…CHGMGRYHKQ (79 aa)). Residues C146, C149, C163, C166, C185, C188, C199, and C202 each coordinate Zn(2+). CXXCXGXG motif repeat units lie at residues 146–153 (CDACHGTG), 163–170 (CDSCGGVG), 185–192 (CHKCQGNG), and 199–206 (CKKCHGMG).

It belongs to the DnaJ family. Homodimer. It depends on Zn(2+) as a cofactor.

Its subcellular location is the cytoplasm. Functionally, participates actively in the response to hyperosmotic and heat shock by preventing the aggregation of stress-denatured proteins and by disaggregating proteins, also in an autonomous, DnaK-independent fashion. Unfolded proteins bind initially to DnaJ; upon interaction with the DnaJ-bound protein, DnaK hydrolyzes its bound ATP, resulting in the formation of a stable complex. GrpE releases ADP from DnaK; ATP binding to DnaK triggers the release of the substrate protein, thus completing the reaction cycle. Several rounds of ATP-dependent interactions between DnaJ, DnaK and GrpE are required for fully efficient folding. Also involved, together with DnaK and GrpE, in the DNA replication of plasmids through activation of initiation proteins. This Rickettsia typhi (strain ATCC VR-144 / Wilmington) protein is Chaperone protein DnaJ.